Consider the following 1131-residue polypeptide: Kinesin-like protein CG14535 (1131 aa).

The span at 1–11 (MATTSTSNMSR) shows a compositional bias: polar residues. A disordered region spans residues 1–25 (MATTSTSNMSRNGGFCGALQRAPPP). The Kinesin motor domain occupies 44-396 (KVKVMLRVAD…IQIASRIHRL (353 aa)). 4 disordered regions span residues 472–494 (ALKG…MMMK), 693–753 (DLPD…SRDI), 905–926 (PAYR…QGSL), and 1016–1072 (TSSE…QRHR). Positions 483 to 494 (SKSASNSPMMMK) are enriched in low complexity. Residues 1016–1032 (TSSEAYDSGHDSNSTPR) are compositionally biased toward polar residues.

Belongs to the TRAFAC class myosin-kinesin ATPase superfamily. Kinesin family. KIF26 subfamily.

Its subcellular location is the cytoplasm. It is found in the cytoskeleton. The sequence is that of Kinesin-like protein CG14535 from Drosophila melanogaster (Fruit fly).